We begin with the raw amino-acid sequence, 123 residues long: Small ribosomal subunit protein uS12 (123 aa).

Asp-89 carries the 3-methylthioaspartic acid modification.

The protein belongs to the universal ribosomal protein uS12 family. In terms of assembly, part of the 30S ribosomal subunit. Contacts proteins S8 and S17. May interact with IF1 in the 30S initiation complex.

With S4 and S5 plays an important role in translational accuracy. Functionally, interacts with and stabilizes bases of the 16S rRNA that are involved in tRNA selection in the A site and with the mRNA backbone. Located at the interface of the 30S and 50S subunits, it traverses the body of the 30S subunit contacting proteins on the other side and probably holding the rRNA structure together. The combined cluster of proteins S8, S12 and S17 appears to hold together the shoulder and platform of the 30S subunit. This chain is Small ribosomal subunit protein uS12, found in Rhizobium etli (strain ATCC 51251 / DSM 11541 / JCM 21823 / NBRC 15573 / CFN 42).